The chain runs to 236 residues: NAD(P)H-hydrate epimerase (236 aa).

Positions 11–217 constitute a YjeF N-terminal domain; the sequence is AAALDRELMS…SIAKKYDFDV (207 aa). Residue 61-65 participates in (6S)-NADPHX binding; that stretch reads NNGGD. The K(+) site is built by Asn-62 and Asp-123. Residues 127 to 133 and Asp-156 contribute to the (6S)-NADPHX site; that span reads GFSFSGE. Ser-159 lines the K(+) pocket.

Belongs to the NnrE/AIBP family. The cofactor is K(+).

Its subcellular location is the cytoplasm. The protein localises to the mitochondrion. The catalysed reaction is (6R)-NADHX = (6S)-NADHX. It catalyses the reaction (6R)-NADPHX = (6S)-NADPHX. In terms of biological role, catalyzes the epimerization of the S- and R-forms of NAD(P)HX, a damaged form of NAD(P)H that is a result of enzymatic or heat-dependent hydration. This is a prerequisite for the S-specific NAD(P)H-hydrate dehydratase to allow the repair of both epimers of NAD(P)HX. The polypeptide is NAD(P)H-hydrate epimerase (Neurospora crassa (strain ATCC 24698 / 74-OR23-1A / CBS 708.71 / DSM 1257 / FGSC 987)).